A 274-amino-acid polypeptide reads, in one-letter code: NH(3)-dependent NAD(+) synthetase (274 aa).

46 to 53 (GISGGQDS) serves as a coordination point for ATP. D52 lines the Mg(2+) pocket. R140 lines the deamido-NAD(+) pocket. T160 is a binding site for ATP. Position 165 (E165) interacts with Mg(2+). Deamido-NAD(+) contacts are provided by K173 and D180. Residues K189 and T211 each coordinate ATP. Position 260 to 261 (260 to 261 (HK)) interacts with deamido-NAD(+).

The protein belongs to the NAD synthetase family. As to quaternary structure, homodimer.

It carries out the reaction deamido-NAD(+) + NH4(+) + ATP = AMP + diphosphate + NAD(+) + H(+). Its pathway is cofactor biosynthesis; NAD(+) biosynthesis; NAD(+) from deamido-NAD(+) (ammonia route): step 1/1. Functionally, catalyzes the ATP-dependent amidation of deamido-NAD to form NAD. Uses ammonia as a nitrogen source. The sequence is that of NH(3)-dependent NAD(+) synthetase from Rhodococcus erythropolis (strain PR4 / NBRC 100887).